The following is a 923-amino-acid chain: MRYHGICWFIFQAAIIFAIFGSCQGAFRHQFKTAEQDGFARRNRDLAKFQKENLNWNGLFQLNSISYNSGVVSGVFEQQSENGENQHLFPFSISFLKNDVVRFQMDEKSRLEGTVEYEKNILTKRRFDASTELGFNERAEVYGKDAHLLEQTSTSLTIRYGSHGRFTVIVTFSPFKVEFQRDGEPQVVLNERHLLNMEYYRPKSSRTPEQEANGMWDETFDNFHDSKPKGPESVGLDIKFVDYGNVYGVPEHTSSLSLKETNNSDAGYTEPYRLYNVDLFEYEVDSPMSQYGAIPFMQAHKPNSDVAVFWSNAAATWIDVEKESGPSPHSQSTSTHWYSESGTLDLFIFLGPKASDVYESYSALVGRPLLPPLFSIGYHQCRWNYVSEEDVLNVDAKFDEVDMPYDTIWLDIEYASKRRYFTWDKATFPNPKAMLEKLDSKSRKLIVILDPHIKNDPNYFVSKELIDYNYAVKDKSGVDNYNADCWPGNSVWVDFFNPEAQAWWGSLYEFDRFESDKNLWIWNDMNEPSVFRGPETSMHRDAIHYGGWEHRDIHNIYGHKCINGTYNGLIKRGEGAVRPFILTRSFFAGTSALAANWIGDTMTTWEHLRGSIPTVLTNGISGMAFSGADVAGFFGNPDAELFVRWYETAIFYPFFRAHAHIDTKRREPWLYGEPYTSLVRELLRIRYRLLPTWYTAFYNSHTHGFPILYPQFLMHPEDEEGFAIDDQFYVGDSGLLVKPVTHPSIDKITIYLADDEVYFDLHDHTEYAGKGHQVVPAPLGRVPVLLRGGNILITRERIRRAAELTRNDPFTLTIAVSKIGKNASGFLYLDDGVTFNYKKGEYLIRHFSYENGILTMKDSHSNPPVSPKYSSSQKHLKVERINIYGEQTRKSIKIRKIIDSEVTEWDVSVDDSGCIRNPQLFLV.

Positions 1–25 are cleaved as a signal peptide; it reads MRYHGICWFIFQAAIIFAIFGSCQG. N-linked (GlcNAc...) asparagine glycosylation is present at Asn262. Asp524 functions as the Nucleophile in the catalytic mechanism. Glu527 is a catalytic residue. Residue Asn563 is glycosylated (N-linked (GlcNAc...) asparagine). Asp600 functions as the Proton donor in the catalytic mechanism. Residue Asn822 is glycosylated (N-linked (GlcNAc...) asparagine).

Belongs to the glycosyl hydrolase 31 family. Heterodimer of a catalytic subunit alpha (gls2) and a subunit beta (gtb1).

The protein localises to the endoplasmic reticulum. The enzyme catalyses N(4)-(alpha-D-Glc-(1-&gt;3)-alpha-D-Man-(1-&gt;2)-alpha-D-Man-(1-&gt;2)-alpha-D-Man-(1-&gt;3)-[alpha-D-Man-(1-&gt;2)-alpha-D-Man-(1-&gt;3)-[alpha-D-Man-(1-&gt;2)-alpha-D-Man-(1-&gt;6)]-alpha-D-Man-(1-&gt;6)]-beta-D-Man-(1-&gt;4)-beta-D-GlcNAc-(1-&gt;4)-beta-D-GlcNAc)-L-asparaginyl-[protein] + H2O = N(4)-(alpha-D-Man-(1-&gt;2)-alpha-D-Man-(1-&gt;2)-alpha-D-Man-(1-&gt;3)-[alpha-D-Man-(1-&gt;2)-alpha-D-Man-(1-&gt;3)-[alpha-D-Man-(1-&gt;2)-alpha-D-Man-(1-&gt;6)]-alpha-D-Man-(1-&gt;6)]-beta-D-Man-(1-&gt;4)-beta-D-GlcNAc-(1-&gt;4)-beta-D-GlcNAc)-L-asparaginyl-[protein] (N-glucan mannose isomer 9A1,2,3B1,2,3) + beta-D-glucose. It carries out the reaction N(4)-(alpha-D-Glc-(1-&gt;3)-alpha-D-Glc-(1-&gt;3)-alpha-D-Man-(1-&gt;2)-alpha-D-Man-(1-&gt;2)-alpha-D-Man-(1-&gt;3)-[alpha-D-Man-(1-&gt;2)-alpha-D-Man-(1-&gt;3)-[alpha-D-Man-(1-&gt;2)-alpha-D-Man-(1-&gt;6)]-alpha-D-Man-(1-&gt;6)]-beta-D-Man-(1-&gt;4)-beta-D-GlcNAc-(1-&gt;4)-beta-D-GlcNAc)-L-asparaginyl-[protein] + H2O = N(4)-(alpha-D-Glc-(1-&gt;3)-alpha-D-Man-(1-&gt;2)-alpha-D-Man-(1-&gt;2)-alpha-D-Man-(1-&gt;3)-[alpha-D-Man-(1-&gt;2)-alpha-D-Man-(1-&gt;3)-[alpha-D-Man-(1-&gt;2)-alpha-D-Man-(1-&gt;6)]-alpha-D-Man-(1-&gt;6)]-beta-D-Man-(1-&gt;4)-beta-D-GlcNAc-(1-&gt;4)-beta-D-GlcNAc)-L-asparaginyl-[protein] + beta-D-glucose. It functions in the pathway glycan metabolism; N-glycan metabolism. Functionally, catalytic subunit of glucosidase 2, which cleaves sequentially the 2 innermost alpha-1,3-linked glucose residues from the Glc(2)Man(9)GlcNAc(2) oligosaccharide precursor of immature glycoproteins. In Schizosaccharomyces pombe (strain 972 / ATCC 24843) (Fission yeast), this protein is Glucosidase 2 subunit alpha.